The sequence spans 195 residues: Holliday junction branch migration complex subunit RuvA (195 aa).

The segment at 1–63 (MIASVRGEVI…EDSMTLYGFV (63 aa)) is domain I. Residues 64-142 (DGDARDLFLT…PVSAGGGAAV (79 aa)) form a domain II region. A flexible linker region spans residues 143–150 (GGHAIRGP). The segment at 150-195 (PVVEALVGLGFAAKQAEEATDKVLANDPEATTSSALRAALSMLGKK) is domain III.

It belongs to the RuvA family. In terms of assembly, homotetramer. Forms an RuvA(8)-RuvB(12)-Holliday junction (HJ) complex. HJ DNA is sandwiched between 2 RuvA tetramers; dsDNA enters through RuvA and exits via RuvB. An RuvB hexamer assembles on each DNA strand where it exits the tetramer. Each RuvB hexamer is contacted by two RuvA subunits (via domain III) on 2 adjacent RuvB subunits; this complex drives branch migration. In the full resolvosome a probable DNA-RuvA(4)-RuvB(12)-RuvC(2) complex forms which resolves the HJ.

The protein resides in the cytoplasm. Functionally, the RuvA-RuvB-RuvC complex processes Holliday junction (HJ) DNA during genetic recombination and DNA repair, while the RuvA-RuvB complex plays an important role in the rescue of blocked DNA replication forks via replication fork reversal (RFR). RuvA specifically binds to HJ cruciform DNA, conferring on it an open structure. The RuvB hexamer acts as an ATP-dependent pump, pulling dsDNA into and through the RuvAB complex. HJ branch migration allows RuvC to scan DNA until it finds its consensus sequence, where it cleaves and resolves the cruciform DNA. The polypeptide is Holliday junction branch migration complex subunit RuvA (Mycolicibacterium smegmatis (strain ATCC 700084 / mc(2)155) (Mycobacterium smegmatis)).